We begin with the raw amino-acid sequence, 180 residues long: ATP-dependent protease subunit HslV (180 aa).

Residue threonine 2 is part of the active site. 3 residues coordinate Na(+): glycine 157, cysteine 160, and threonine 163.

This sequence belongs to the peptidase T1B family. HslV subfamily. In terms of assembly, a double ring-shaped homohexamer of HslV is capped on each side by a ring-shaped HslU homohexamer. The assembly of the HslU/HslV complex is dependent on binding of ATP.

It localises to the cytoplasm. The catalysed reaction is ATP-dependent cleavage of peptide bonds with broad specificity.. Its activity is regulated as follows. Allosterically activated by HslU binding. Protease subunit of a proteasome-like degradation complex believed to be a general protein degrading machinery. The sequence is that of ATP-dependent protease subunit HslV from Tolumonas auensis (strain DSM 9187 / NBRC 110442 / TA 4).